The sequence spans 384 residues: Transcription factor iacI (384 aa).

Its subcellular location is the nucleus. Transcription factor; part of the gene cluster that mediates the biosynthesis of iso-A82775C, a enylepoxycyclohexane and biosynthetic precursor of the chloropestolide anticancer natural products. This is Transcription factor iacI from Pestalotiopsis fici (strain W106-1 / CGMCC3.15140).